Here is a 374-residue protein sequence, read N- to C-terminus: tRNA-specific 2-thiouridylase MnmA (374 aa).

ATP-binding positions include 15–22 (GMSGGVDS) and M41. Positions 101–103 (NPD) are interaction with target base in tRNA. C106 functions as the Nucleophile in the catalytic mechanism. The cysteines at positions 106 and 203 are disulfide-linked. G130 lines the ATP pocket. The interval 153 to 155 (KDQ) is interaction with tRNA. C203 functions as the Cysteine persulfide intermediate in the catalytic mechanism. An interaction with tRNA region spans residues 311-312 (RY).

It belongs to the MnmA/TRMU family.

It is found in the cytoplasm. The enzyme catalyses S-sulfanyl-L-cysteinyl-[protein] + uridine(34) in tRNA + AH2 + ATP = 2-thiouridine(34) in tRNA + L-cysteinyl-[protein] + A + AMP + diphosphate + H(+). Functionally, catalyzes the 2-thiolation of uridine at the wobble position (U34) of tRNA, leading to the formation of s(2)U34. This chain is tRNA-specific 2-thiouridylase MnmA, found in Lysinibacillus sphaericus (strain C3-41).